The following is a 529-amino-acid chain: Probable pectinesterase/pectinesterase inhibitor 35 (529 aa).

The signal sequence occupies residues 1–34 (MATTSFSLPNHKFGIKLMLFLVLNLLSLQTSVFA). The pectinesterase inhibitor 35 stretch occupies residues 36–180 (SSNSKFTKIS…TGLLTNSLDM (145 aa)). The interval 42–64 (TKISRHPNSDSSSRTKPSTSSNK) is disordered. Low complexity predominate over residues 50–64 (SDSSSRTKPSTSSNK). Asparagine 86, asparagine 169, and asparagine 193 each carry an N-linked (GlcNAc...) asparagine glycan. The pectinesterase 35 stretch occupies residues 228-514 (HAVVAADGSG…FTVSGFIDGN (287 aa)). Substrate contacts are provided by threonine 302 and glutamine 332. The active-site Proton donor; for pectinesterase activity is the aspartate 355. The Nucleophile; for pectinesterase activity role is filled by aspartate 376. Substrate contacts are provided by arginine 434 and tryptophan 436.

It in the N-terminal section; belongs to the PMEI family. This sequence in the C-terminal section; belongs to the pectinesterase family. As to expression, expressed in siliques.

Its subcellular location is the secreted. The protein resides in the cell wall. It catalyses the reaction [(1-&gt;4)-alpha-D-galacturonosyl methyl ester](n) + n H2O = [(1-&gt;4)-alpha-D-galacturonosyl](n) + n methanol + n H(+). It functions in the pathway glycan metabolism; pectin degradation; 2-dehydro-3-deoxy-D-gluconate from pectin: step 1/5. Functionally, acts in the modification of cell walls via demethylesterification of cell wall pectin. This is Probable pectinesterase/pectinesterase inhibitor 35 (PME35) from Arabidopsis thaliana (Mouse-ear cress).